The chain runs to 354 residues: MEKQIFEHSVNVEEEHYQPKQEFHNMEAKLDEALDGELLDAQLEQALKPKSSFRKTLLKFTALLFGLATVAQSVQWIWDSYQQHQWIYLAFALVSLIIILLGIKEIICEWRRLVRLKKREQLQQQSQQIWLESAVKNGDVFSVHNAEKSKILCLDIAKSLGLENDSPAVIQWQHQLNEAYSAQEIAHLFSRHVLSSFDAQAKKLISKMAAESAVIVAISPLAVVDMFFIAWRNLRLMNKIAEIYGIELGYFSRIRLLRMVLVNIAFAGATEVAQDIGMDWLSQDVTAKLSTRIAQGIGVGLLTARLGVKAMELCRPLAFQLNEKPKLSYIQQELLSSVKDIVLGKNKIYKKEQI.

3 consecutive transmembrane segments (helical) span residues 57-77 (LLKF…VQWI), 87-107 (IYLA…KEII), and 211-231 (ESAV…FIAW).

Belongs to the UPF0283 family.

The protein localises to the cell inner membrane. The polypeptide is UPF0283 membrane protein CGSHiGG_02710 (Haemophilus influenzae (strain PittGG)).